A 161-amino-acid chain; its full sequence is Transcription elongation factor GreA (161 aa).

Positions 46-71 (AEYTAAKEKQSFLHGKLQELENNLAL) form a coiled coil.

Belongs to the GreA/GreB family.

Its function is as follows. Necessary for efficient RNA polymerase transcription elongation past template-encoded arresting sites. The arresting sites in DNA have the property of trapping a certain fraction of elongating RNA polymerases that pass through, resulting in locked ternary complexes. Cleavage of the nascent transcript by cleavage factors such as GreA or GreB allows the resumption of elongation from the new 3'terminus. GreA releases sequences of 2 to 3 nucleotides. In Syntrophus aciditrophicus (strain SB), this protein is Transcription elongation factor GreA.